A 142-amino-acid chain; its full sequence is Nucleoside diphosphate kinase (142 aa).

ATP contacts are provided by lysine 11, phenylalanine 59, arginine 87, threonine 93, arginine 104, and asparagine 114. The active-site Pros-phosphohistidine intermediate is the histidine 117.

This sequence belongs to the NDK family. As to quaternary structure, homotetramer. Mg(2+) is required as a cofactor.

The protein localises to the cytoplasm. The catalysed reaction is a 2'-deoxyribonucleoside 5'-diphosphate + ATP = a 2'-deoxyribonucleoside 5'-triphosphate + ADP. The enzyme catalyses a ribonucleoside 5'-diphosphate + ATP = a ribonucleoside 5'-triphosphate + ADP. Functionally, major role in the synthesis of nucleoside triphosphates other than ATP. The ATP gamma phosphate is transferred to the NDP beta phosphate via a ping-pong mechanism, using a phosphorylated active-site intermediate. In Pectobacterium atrosepticum (strain SCRI 1043 / ATCC BAA-672) (Erwinia carotovora subsp. atroseptica), this protein is Nucleoside diphosphate kinase.